The primary structure comprises 25 residues: Bifunctional chitinase/lysozyme (25 aa).

The protein belongs to the glycosyl hydrolase 19 family. Chitinase class I subfamily. In terms of assembly, monomer.

It localises to the secreted. It is found in the extracellular space. It carries out the reaction Random endo-hydrolysis of N-acetyl-beta-D-glucosaminide (1-&gt;4)-beta-linkages in chitin and chitodextrins.. The enzyme catalyses Hydrolysis of (1-&gt;4)-beta-linkages between N-acetylmuramic acid and N-acetyl-D-glucosamine residues in a peptidoglycan and between N-acetyl-D-glucosamine residues in chitodextrins.. Functionally, bifunctional enzyme with lysozyme/chitinase activity. This chain is Bifunctional chitinase/lysozyme, found in Carica papaya (Papaya).